We begin with the raw amino-acid sequence, 57 residues long: UPF0057 membrane protein T23F2.3 (57 aa).

A run of 2 helical transmembrane segments spans residues 4 to 24 (TCTD…GVFL) and 36 to 56 (ILLT…VILA).

Belongs to the UPF0057 (PMP3) family.

The protein localises to the membrane. The protein is UPF0057 membrane protein T23F2.3 of Caenorhabditis elegans.